Reading from the N-terminus, the 333-residue chain is Eukaryotic translation initiation factor 2 subunit 2 (333 aa).

3 disordered regions span residues 1 to 87 (MSGD…KSKK), 98 to 117 (IKDL…EEDL), and 141 to 165 (EKDE…QTGP). Ser2 carries the post-translational modification N-acetylserine. 2 positions are modified to phosphoserine: Ser2 and Ser13. Positions 13 to 22 (SKKKKKKKKP) are enriched in basic residues. Thr36 is modified (phosphothreonine). Residues 40 to 51 (ETKEVEPEPTED) show a composition bias toward basic and acidic residues. Ser67 carries the phosphoserine modification. Lys102 participates in a covalent cross-link: Glycyl lysine isopeptide (Lys-Gly) (interchain with G-Cter in SUMO2). Position 105 is a phosphoserine (Ser105). A compositionally biased stretch (acidic residues) spans 106–117 (DVQEPAEPEEDL). Phosphoserine is present on residues Ser158 and Ser218. 2 positions are modified to N6-acetyllysine: Lys265 and Lys293. Residues 281–305 (CHTCRSPDTILQKDTRLYFLQCETC) form a C4-type zinc finger.

It belongs to the eIF-2-beta/eIF-5 family. Eukaryotic translation initiation factor 2 eIF2 is a heterotrimeric complex composed of an alpha (EIF2S1), a beta (EIF2S2) and a gamma (EIF2S3) chain. eIF2 is member of the 43S pre-initiation complex (43S PIC). eIF2 forms a complex with at least CELF1/CUGBP1, CALR, CALR3, EIF2S1, EIF2S2, HSP90B1 and HSPA5. Interacts with BZW2/5MP1. Interacts with EIF5.

It localises to the cytoplasm. It is found in the cytosol. Functionally, component of the eIF2 complex that functions in the early steps of protein synthesis by forming a ternary complex with GTP and initiator tRNA. This complex binds to a 40S ribosomal subunit, followed by mRNA binding to form a 43S pre-initiation complex (43S PIC). Junction of the 60S ribosomal subunit to form the 80S initiation complex is preceded by hydrolysis of the GTP bound to eIF2 and release of an eIF2-GDP binary complex. In order for eIF2 to recycle and catalyze another round of initiation, the GDP bound to eIF2 must exchange with GTP by way of a reaction catalyzed by eIF2B. In Bos taurus (Bovine), this protein is Eukaryotic translation initiation factor 2 subunit 2 (EIF2S2).